We begin with the raw amino-acid sequence, 724 residues long: Ribosomal RNA large subunit methyltransferase K/L (724 aa).

Positions 42 to 153 (DAQRLVLWSR…KGRATLSVDL (112 aa)) constitute a THUMP domain.

It belongs to the methyltransferase superfamily. RlmKL family.

It is found in the cytoplasm. It carries out the reaction guanosine(2445) in 23S rRNA + S-adenosyl-L-methionine = N(2)-methylguanosine(2445) in 23S rRNA + S-adenosyl-L-homocysteine + H(+). The enzyme catalyses guanosine(2069) in 23S rRNA + S-adenosyl-L-methionine = N(2)-methylguanosine(2069) in 23S rRNA + S-adenosyl-L-homocysteine + H(+). Functionally, specifically methylates the guanine in position 2445 (m2G2445) and the guanine in position 2069 (m7G2069) of 23S rRNA. The sequence is that of Ribosomal RNA large subunit methyltransferase K/L from Xylella fastidiosa (strain 9a5c).